The chain runs to 346 residues: Acrosin (346 aa).

Residues 1–19 form the signal peptide; it reads MALLLPLAVLLAACRPGHG. 6 disulfides stabilise this stretch: Cys-24–Cys-146, Cys-27–Cys-154, Cys-70–Cys-86, Cys-168–Cys-240, Cys-203–Cys-219, and Cys-230–Cys-260. The Peptidase S1 domain maps to 41–284; that stretch reads VVGGTEALHG…FYNWILLQVR (244 aa). His-85 functions as the Charge relay system in the catalytic mechanism. An N-linked (GlcNAc...) asparagine glycan is attached at Asn-128. The active-site Charge relay system is Asp-134. An N-linked (GlcNAc...) asparagine glycan is attached at Asn-204. Ser-234 (charge relay system) is an active-site residue. Residues 266-346 constitute a propeptide that is removed on maturation; sequence PGIYTSTQHF…LLQSLWGSKA (81 aa).

This sequence belongs to the peptidase S1 family. Heavy chain (catalytic) and a light chain linked by two disulfide bonds. Post-translationally, glycosylated.

The enzyme catalyses Preferential cleavage: Arg-|-Xaa, Lys-|-Xaa.. Its activity is regulated as follows. Inhibited by aprotinin, ovomucoid, soybean trypsin inhibitor, benzamidine, p-aminobenzamidine, and zinc ions. Activity also inhibited by a Kazal-type proteinase inhibitor. Functionally, serine protease of trypsin-like cleavage specificity. Synthesized in a zymogen form, proacrosin and stored in the acrosome. The protein is Acrosin of Meleagris gallopavo (Wild turkey).